The primary structure comprises 1004 residues: Receptor-type tyrosine-protein phosphatase N2 (1004 aa).

The first 27 residues, 1–27, serve as a signal peptide directing secretion; it reads MGLPLPLLLLLLLPPPLPRALPAPASA. The interval 1 to 409 is involved in localization to secretory granules; interaction with CPE; that stretch reads MGLPLPLLLL…PEAPLLEKSS (409 aa). The Extracellular portion of the chain corresponds to 28-603; the sequence is RGRQLPGRLG…HPEEQEDSTK (576 aa). Arg259 carries the omega-N-methylarginine modification. Disordered stretches follow at residues 274–294, 333–360, and 393–459; these read APALSQRWPLPPGDSKDSLSM, QSDPVEGSQESHGRGAEGQLREQADAPE, and DHGS…WRLE. Ser340 bears the Phosphoserine mark. Basic and acidic residues-rich tracts occupy residues 341-356 and 407-418; these read QESHGRGAEGQLREQA and KSSRAEMKKSEQ. Acidic residues predominate over residues 419–430; it reads PEEVLSSEEETA. A phosphoserine mark is found at Ser424 and Ser425. The segment covering 431–450 has biased composition (basic and acidic residues); the sequence is GVEHVKSRTYSKDLLERKPN. Asn553 carries N-linked (GlcNAc...) asparagine glycosylation. The helical transmembrane segment at 604–624 threads the bilayer; that stretch reads FIVLTFLSIACILAVLLASSL. At 625 to 1004 the chain is on the cytoplasmic side; that stretch reads AYCLRHNSHY…VNAILKALPQ (380 aa). Positions 655 to 664 match the Tyrosine-based internalization motif motif; that stretch reads YQELCRQRMA. The interval 665–710 is disordered; it reads VRPQDHSEGPHTSRINSVSSQLSDGPMPSPSARSSTSSWSEEPAQS. Over residues 677–687 the composition is skewed to polar residues; sequence SRINSVSSQLS. Ser681 carries the phosphoserine; by PKA modification. The residue at position 687 (Ser687) is a Phosphoserine. Positions 694-710 are enriched in low complexity; the sequence is PSARSSTSSWSEEPAQS. Thr700 carries the phosphothreonine; by PKA modification. The Tyrosine-protein phosphatase domain maps to 734 to 994; the sequence is LEKEWEALCA…EFALTAVAEE (261 aa). Substrate-binding positions include Asp902 and 934-940; that span reads CSDGAGR. Catalysis depends on Cys934, which acts as the Phosphocysteine intermediate. Residue Lys959 is modified to N6-acetyllysine. A substrate-binding site is contributed by Gln979. Residues 993–999 carry the Leucine-based sorting signal motif; that stretch reads EEVNAIL.

Belongs to the protein-tyrosine phosphatase family. Receptor class 8 subfamily. Self-associates. Interacts (via cytoplasmic domain) with PTPRN (via cytoplasmic domain). Interacts (precursor form) with CPE. Interacts with HAP1. Interacts with AP2A1 or AP2A2 and AP1G1; indicative for an association with adaptor protein complex 2 (AP-2) and adaptor protein complex 1 (AP-1). Interacts with AP2M1; indicative for an association with adaptor protein complex 2 (AP-2). Interacts with MYO5A. In terms of processing, subject to proteolytic cleavage at multiple sites.

It localises to the cytoplasmic vesicle. The protein resides in the secretory vesicle membrane. The protein localises to the secretory vesicle. It is found in the synaptic vesicle membrane. The enzyme catalyses O-phospho-L-tyrosyl-[protein] + H2O = L-tyrosyl-[protein] + phosphate. Plays a role in vesicle-mediated secretory processes. Required for normal accumulation of secretory vesicles in hippocampus, pituitary and pancreatic islets. Required for the accumulation of normal levels of insulin-containing vesicles and preventing their degradation. Plays a role in insulin secretion in response to glucose stimuli. Required for normal accumulation of the neurotransmitters norepinephrine, dopamine and serotonin in the brain. In females, but not in males, required for normal accumulation and secretion of pituitary hormones, such as luteinizing hormone (LH) and follicle-stimulating hormone (FSH). Required to maintain normal levels of renin expression and renin release. May regulate catalytic active protein-tyrosine phosphatases such as PTPRA through dimerization. Has phosphatidylinositol phosphatase activity; the PIPase activity is involved in its ability to regulate insulin secretion. Can dephosphorylate phosphatidylinositol 4,5-biphosphate, phosphatidylinositol 5-phosphate and phosphatidylinositol 3-phosphate. Regulates PI(4,5)P2 level in the plasma membrane and localization of cofilin at the plasma membrane and thus is indirectly involved in regulation of actin dynamics related to cell migration and metastasis; upon hydrolysis of PI(4,5)P2 cofilin is released from the plasma membrane and acts in the cytoplasm in severing F-actin filaments. The sequence is that of Receptor-type tyrosine-protein phosphatase N2 (Ptprn2) from Rattus norvegicus (Rat).